A 728-amino-acid chain; its full sequence is Catalase-peroxidase (728 aa).

Positions 91-218 form a cross-link, tryptophyl-tyrosyl-methioninium (Trp-Tyr) (with M-244); it reads WHSAGTYRTA…LAAVQMGLIY (128 aa). His-92 serves as the catalytic Proton acceptor. Residues 218 to 244 constitute a cross-link (tryptophyl-tyrosyl-methioninium (Tyr-Met) (with W-91)); it reads YVNPEGPDGTPDPVAAAHDIRETFARM. Residue His-259 participates in heme b binding.

It belongs to the peroxidase family. Peroxidase/catalase subfamily. In terms of assembly, homodimer or homotetramer. Heme b is required as a cofactor. Post-translationally, formation of the three residue Trp-Tyr-Met cross-link is important for the catalase, but not the peroxidase activity of the enzyme.

The catalysed reaction is H2O2 + AH2 = A + 2 H2O. It carries out the reaction 2 H2O2 = O2 + 2 H2O. Its function is as follows. Bifunctional enzyme with both catalase and broad-spectrum peroxidase activity. This is Catalase-peroxidase from Burkholderia lata (strain ATCC 17760 / DSM 23089 / LMG 22485 / NCIMB 9086 / R18194 / 383).